The chain runs to 132 residues: MRRGLVIVGHGSQLNHYREVMELHRKRIEESGAFDEVKIAFAARKRRPMPDEAIREMNCDIIYVVPLFISYGLHVTEDLPDLLGFPRGRGIKEGEFEGKKVVICEPIGEDYFVTYAILNSVFRIGRDGKGEE.

The Proton acceptor role is filled by histidine 10. Histidine 10 is a binding site for Co(2+). Substrate contacts are provided by residues arginine 46 and 69 to 74 (ISYGLH). Histidine 74 contributes to the Co(2+) binding site.

This sequence belongs to the CbiX family. CbiXS subfamily. In terms of assembly, homotetramer; dimer of dimers.

It catalyses the reaction Co-sirohydrochlorin + 2 H(+) = sirohydrochlorin + Co(2+). It functions in the pathway cofactor biosynthesis; adenosylcobalamin biosynthesis; cob(II)yrinate a,c-diamide from sirohydrochlorin (anaerobic route): step 1/10. Catalyzes the insertion of Co(2+) into sirohydrochlorin as part of the anaerobic pathway to cobalamin biosynthesis. In Archaeoglobus fulgidus (strain ATCC 49558 / DSM 4304 / JCM 9628 / NBRC 100126 / VC-16), this protein is Sirohydrochlorin cobaltochelatase.